The sequence spans 199 residues: FMN-dependent NADH:quinone oxidoreductase 1 (199 aa).

FMN contacts are provided by residues Ser10, 17–19 (SNS), and 87–90 (MYNF).

Belongs to the azoreductase type 1 family. In terms of assembly, homodimer. FMN serves as cofactor.

The enzyme catalyses 2 a quinone + NADH + H(+) = 2 a 1,4-benzosemiquinone + NAD(+). It carries out the reaction N,N-dimethyl-1,4-phenylenediamine + anthranilate + 2 NAD(+) = 2-(4-dimethylaminophenyl)diazenylbenzoate + 2 NADH + 2 H(+). Its function is as follows. Quinone reductase that provides resistance to thiol-specific stress caused by electrophilic quinones. Functionally, also exhibits azoreductase activity. Catalyzes the reductive cleavage of the azo bond in aromatic azo compounds to the corresponding amines. The polypeptide is FMN-dependent NADH:quinone oxidoreductase 1 (Mesoplasma florum (strain ATCC 33453 / NBRC 100688 / NCTC 11704 / L1) (Acholeplasma florum)).